The chain runs to 301 residues: Thioredoxin-related transmembrane protein 2-A (301 aa).

Positions M1 to K19 are cleaved as a signal peptide. The Extracellular segment spans residues W20–R111. Residues F112–Y132 traverse the membrane as a helical segment. A Thioredoxin domain is found at V122–K269. Residues M133–K301 are Cytoplasmic-facing. The interval S268–K301 is disordered. Residues L280 to S295 are compositionally biased toward acidic residues. The Di-lysine motif signature appears at K298–K301.

In terms of assembly, monomer. Homodimer; disulfide-linked. Occurs in both reduced and oxidized monomeric form. Oxidative conditions increase homodimerization.

It localises to the endoplasmic reticulum membrane. The protein localises to the mitochondrion membrane. Endoplasmic reticulum and mitochondria-associated protein that probably functions as a regulator of cellular redox state and thereby regulates protein post-translational modification, protein folding and mitochondrial activity. In Danio rerio (Zebrafish), this protein is Thioredoxin-related transmembrane protein 2-A.